The chain runs to 412 residues: MSYIEKIDPDMFEAIQKEADRQEHKLNLIASENYASRAVMEAQGSIMTNKYAEGYSGKRYYGGCDFVDIAENLAIARAKEIFGAKYVNVQPHSGSGANMAVYFSVLQPGDTIMSMDLSHGGHLSHGSPVSFSGKLYNIVPYGVSKETEALDYDELMKMAKECKPKMIVCGASAYPRVIDFKKFREIADEVGAYLLADIAHIAGLVVSGVHPSPVPYADFVTTTTHKTLRGPRGGMIISKTEELAMGVNKAVFPGIQGGPLMHVIAAKAVAFKEAMDEKFRQDQAQTVKNAKVLCACLKEKGFDIVSGGTDNHLMLVNLNNMNITGKDAEAAMSKAGIIANKNTVPFETRSPFITSGVRLGTPACTTRGMKEKEMELIADYIETAIKNAGNDALLSEVSAKVRDLCSRFPVYS.

(6S)-5,6,7,8-tetrahydrofolate is bound by residues Leu117 and 121-123 (GHL). Lys226 carries the post-translational modification N6-(pyridoxal phosphate)lysine. (6S)-5,6,7,8-tetrahydrofolate is bound by residues Glu242 and 350–352 (SPF).

Belongs to the SHMT family. In terms of assembly, homodimer. It depends on pyridoxal 5'-phosphate as a cofactor.

It is found in the cytoplasm. The catalysed reaction is (6R)-5,10-methylene-5,6,7,8-tetrahydrofolate + glycine + H2O = (6S)-5,6,7,8-tetrahydrofolate + L-serine. It participates in one-carbon metabolism; tetrahydrofolate interconversion. Its pathway is amino-acid biosynthesis; glycine biosynthesis; glycine from L-serine: step 1/1. Catalyzes the reversible interconversion of serine and glycine with tetrahydrofolate (THF) serving as the one-carbon carrier. Also exhibits THF-independent aldolase activity toward beta-hydroxyamino acids, producing glycine and aldehydes, via a retro-aldol mechanism. This Methanosarcina acetivorans (strain ATCC 35395 / DSM 2834 / JCM 12185 / C2A) protein is Serine hydroxymethyltransferase.